The primary structure comprises 81 residues: Small cysteine-rich protein 4 (81 aa).

The first 23 residues, 1 to 23 (MDTKVACLLLIILGALTVQGAVS), serve as a signal peptide directing secretion. The propeptide occupies 24-25 (GN).

This sequence belongs to the Cnidaria small cysteine-rich protein (SCRiP) family. beta subfamily. In terms of processing, contains 4 disulfide bonds.

It localises to the secreted. The protein localises to the nematocyst. Its function is as follows. Induces neurotoxic symptoms on zebrafish. Has also been claimed to be implied in calcification, but tests on homolog proteins suggest that proteins of this family have a neurotoxic function and not a calcification function. The polypeptide is Small cysteine-rich protein 4 (Orbicella faveolata (Mountainous star coral)).